The primary structure comprises 327 residues: Glycerol-3-phosphate acyltransferase (327 aa).

A run of 5 helical transmembrane segments spans residues 3–23 (SLLWLAVAYVMGSIPFGLLFA), 52–72 (VGVLTLVCDALKGAIPVAVAL), 78–98 (TVFHSLTALAALLGHLYSCFL), 112–132 (VFLPLAFWPLVLSGIACLAVI), and 152–172 (MLLLGGHWKLVPLALVVMVLV). 2 disordered regions span residues 184–212 (SRGEEKPWQKKHHDAAQGTDAGAAPEAAA) and 233–327 (PSTE…SSGQ). The span at 199 to 212 (AQGTDAGAAPEAAA) shows a compositional bias: low complexity. Polar residues predominate over residues 237–246 (AAPSQETSDA). The span at 259–271 (EGDKRENEEHDNA) shows a compositional bias: basic and acidic residues.

Belongs to the PlsY family. In terms of assembly, probably interacts with PlsX.

The protein localises to the cell inner membrane. The enzyme catalyses an acyl phosphate + sn-glycerol 3-phosphate = a 1-acyl-sn-glycero-3-phosphate + phosphate. The protein operates within lipid metabolism; phospholipid metabolism. Catalyzes the transfer of an acyl group from acyl-phosphate (acyl-PO(4)) to glycerol-3-phosphate (G3P) to form lysophosphatidic acid (LPA). This enzyme utilizes acyl-phosphate as fatty acyl donor, but not acyl-CoA or acyl-ACP. The protein is Glycerol-3-phosphate acyltransferase of Nitratidesulfovibrio vulgaris (strain ATCC 29579 / DSM 644 / CCUG 34227 / NCIMB 8303 / VKM B-1760 / Hildenborough) (Desulfovibrio vulgaris).